A 63-amino-acid chain; its full sequence is uncharacterized protein (63 aa).

The helical transmembrane segment at 15 to 37 (ISHCHLPLSPATAIAIIICFRIV) threads the bilayer.

It localises to the membrane. This is an uncharacterized protein from Saccharomyces cerevisiae (strain ATCC 204508 / S288c) (Baker's yeast).